Here is a 495-residue protein sequence, read N- to C-terminus: Monoamine oxidase N (495 aa).

Residues 1–19 show a composition bias toward polar residues; the sequence is MTSRDGYQWTPETGLTQGV. A disordered region spans residues 1 to 23; it reads MTSRDGYQWTPETGLTQGVPSLG. Positions 493-495 match the Microbody targeting signal motif; that stretch reads ARL.

Belongs to the flavin monoamine oxidase family. FAD serves as cofactor.

The protein localises to the peroxisome. The catalysed reaction is a secondary aliphatic amine + O2 + H2O = a primary amine + an aldehyde + H2O2. The sequence is that of Monoamine oxidase N (maoN) from Aspergillus niger.